The following is a 61-amino-acid chain: UPF0181 protein Ent638_2380 (61 aa).

Belongs to the UPF0181 family.

This chain is UPF0181 protein Ent638_2380, found in Enterobacter sp. (strain 638).